Consider the following 679-residue polypeptide: Transketolase (679 aa).

His-30 lines the substrate pocket. Thiamine diphosphate-binding positions include His-69 and 116–118; that span reads GPL. Asp-157 is a binding site for Mg(2+). Thiamine diphosphate is bound by residues Gly-158 and Asn-187. Asn-187 and Ile-189 together coordinate Mg(2+). Residues His-262, Arg-358, and Ser-385 each coordinate substrate. His-262 serves as a coordination point for thiamine diphosphate. The thiamine diphosphate site is built by Glu-417 and Phe-444. The active-site Proton donor is Glu-417. Substrate is bound by residues His-468, Asp-476, and Arg-527.

This sequence belongs to the transketolase family. In terms of assembly, homodimer. Mg(2+) serves as cofactor. Ca(2+) is required as a cofactor. Requires Mn(2+) as cofactor. It depends on Co(2+) as a cofactor. The cofactor is thiamine diphosphate.

It carries out the reaction D-sedoheptulose 7-phosphate + D-glyceraldehyde 3-phosphate = aldehydo-D-ribose 5-phosphate + D-xylulose 5-phosphate. Functionally, catalyzes the transfer of a two-carbon ketol group from a ketose donor to an aldose acceptor, via a covalent intermediate with the cofactor thiamine pyrophosphate. The protein is Transketolase (TKL1) of Kluyveromyces lactis (strain ATCC 8585 / CBS 2359 / DSM 70799 / NBRC 1267 / NRRL Y-1140 / WM37) (Yeast).